A 148-amino-acid chain; its full sequence is Ribonuclease H (148 aa).

One can recognise an RNase H type-1 domain in the interval 1–142 (MSDSVEIYTD…ADQLANRGVD (142 aa)). 4 residues coordinate Mg(2+): Asp10, Glu48, Asp70, and Asp134. The disordered stretch occupies residues 129-148 (GNERADQLANRGVDEVRAQR).

Belongs to the RNase H family. As to quaternary structure, monomer. The cofactor is Mg(2+).

The protein resides in the cytoplasm. It catalyses the reaction Endonucleolytic cleavage to 5'-phosphomonoester.. Endonuclease that specifically degrades the RNA of RNA-DNA hybrids. This is Ribonuclease H from Pseudomonas entomophila (strain L48).